The sequence spans 334 residues: MTAVLAGHASALLLTEEPDCSGPQTVVLFRREPLLLDCGRALSDVRVAFHTYGTPRADATLVLHALTGDSAVHEWWPDFLGAGRPLDPADDYVVCANVLGGCAGTTSAAELAATCSGPVPLSLRDMARVGRALLDSLGVRRVRVIGASMGGMLAYAWLLECPDLVEKAVIIGAPARHSPWAIGLNTAARSAIALAPGGEGLKVARQIAMLSYRSPESLSRTQAGQRVPGVPAVTSYLHYQGEKLAARFDEQTYCALTWAMDAFQPSSADLKAVRAPVLVVGISSDLLYPAAEVRACAAELPHADYWELGSIHGHDAFLMDPQDLPERVGAFLRS.

Residues 61-318 (LVLHALTGDS…GSIHGHDAFL (258 aa)) enclose the AB hydrolase-1 domain. The active-site Nucleophile is the S148. A substrate-binding site is contributed by R205. Active-site residues include D285 and H314. Residue D315 participates in substrate binding.

It belongs to the AB hydrolase superfamily. MetX family. Homodimer.

Its subcellular location is the cytoplasm. The catalysed reaction is L-homoserine + acetyl-CoA = O-acetyl-L-homoserine + CoA. It participates in amino-acid biosynthesis; L-methionine biosynthesis via de novo pathway; O-acetyl-L-homoserine from L-homoserine: step 1/1. In terms of biological role, transfers an acetyl group from acetyl-CoA to L-homoserine, forming acetyl-L-homoserine. This is Homoserine O-acetyltransferase from Deinococcus radiodurans (strain ATCC 13939 / DSM 20539 / JCM 16871 / CCUG 27074 / LMG 4051 / NBRC 15346 / NCIMB 9279 / VKM B-1422 / R1).